A 237-amino-acid polypeptide reads, in one-letter code: MNLKDLIKLLEVKFPQIDSNEVESKITIYKNYLQQENKIHNLTRLDKEEEIYQKYFYESILNFHNDLFDNKNINLLDIGSGSGVPGIFLKILFPHINLYIVESNTKKVNFLNNLVDKLELENVFISNQRCEDYIKDKIEFFDLITCRAVAELRILLELSFPGLKINGIGFFLKSNNYLVELDNAKNISSKLKIEEEPKIETIEYDGKTFVSLKYIKKNKVNNIFPRTWKEILNNDKN.

S-adenosyl-L-methionine-binding positions include Gly79, Cys130–Glu131, and Arg147.

Belongs to the methyltransferase superfamily. RNA methyltransferase RsmG family.

Its subcellular location is the cytoplasm. Its function is as follows. Specifically methylates the N7 position of a guanine in 16S rRNA. In Malacoplasma penetrans (strain HF-2) (Mycoplasma penetrans), this protein is Ribosomal RNA small subunit methyltransferase G.